Consider the following 614-residue polypeptide: DNA mismatch repair protein MutL (614 aa).

Residues 355 to 411 (PLSTGRVSEADPSNYATQSKFDEKPRESGSQGQSSSISAPSSYSRGGEYSARSQPEL) are disordered. Positions 382–401 (SGSQGQSSSISAPSSYSRGG) are enriched in low complexity.

Belongs to the DNA mismatch repair MutL/HexB family.

In terms of biological role, this protein is involved in the repair of mismatches in DNA. It is required for dam-dependent methyl-directed DNA mismatch repair. May act as a 'molecular matchmaker', a protein that promotes the formation of a stable complex between two or more DNA-binding proteins in an ATP-dependent manner without itself being part of a final effector complex. The sequence is that of DNA mismatch repair protein MutL from Shewanella woodyi (strain ATCC 51908 / MS32).